The primary structure comprises 1243 residues: ATP-dependent helicase/nuclease subunit A (1243 aa).

The UvrD-like helicase ATP-binding domain occupies 2–475 (VNWTKEQEEA…IDLARNFRSR (474 aa)). Residue 23–30 (AAAGSGKT) participates in ATP binding. Residues 502 to 803 (AAELIYGNKM…RIMTIHKSKG (302 aa)) form the UvrD-like helicase C-terminal domain.

It belongs to the helicase family. AddA subfamily. Heterodimer of AddA and AddB/RexB. It depends on Mg(2+) as a cofactor.

The catalysed reaction is Couples ATP hydrolysis with the unwinding of duplex DNA by translocating in the 3'-5' direction.. The enzyme catalyses ATP + H2O = ADP + phosphate + H(+). Its function is as follows. The heterodimer acts as both an ATP-dependent DNA helicase and an ATP-dependent, dual-direction single-stranded exonuclease. Recognizes the chi site generating a DNA molecule suitable for the initiation of homologous recombination. The AddA nuclease domain is required for chi fragment generation; this subunit has the helicase and 3' -&gt; 5' nuclease activities. This chain is ATP-dependent helicase/nuclease subunit A, found in Oceanobacillus iheyensis (strain DSM 14371 / CIP 107618 / JCM 11309 / KCTC 3954 / HTE831).